The sequence spans 114 residues: Nucleoid-associated protein PCC8801_2554 (114 aa).

Belongs to the YbaB/EbfC family. Homodimer.

It localises to the cytoplasm. The protein localises to the nucleoid. Functionally, binds to DNA and alters its conformation. May be involved in regulation of gene expression, nucleoid organization and DNA protection. This Rippkaea orientalis (strain PCC 8801 / RF-1) (Cyanothece sp. (strain PCC 8801)) protein is Nucleoid-associated protein PCC8801_2554.